The sequence spans 344 residues: N-acetyl-gamma-glutamyl-phosphate reductase (344 aa).

The active site involves Cys-150.

Belongs to the NAGSA dehydrogenase family. Type 1 subfamily.

It is found in the cytoplasm. It catalyses the reaction N-acetyl-L-glutamate 5-semialdehyde + phosphate + NADP(+) = N-acetyl-L-glutamyl 5-phosphate + NADPH + H(+). Its pathway is amino-acid biosynthesis; L-arginine biosynthesis; N(2)-acetyl-L-ornithine from L-glutamate: step 3/4. Functionally, catalyzes the NADPH-dependent reduction of N-acetyl-5-glutamyl phosphate to yield N-acetyl-L-glutamate 5-semialdehyde. This is N-acetyl-gamma-glutamyl-phosphate reductase from Pseudomonas fluorescens (strain Pf0-1).